Reading from the N-terminus, the 383-residue chain is NifS-like protein (383 aa).

Pyridoxal 5'-phosphate is bound by residues Ser58 to Glu59 and Ser184 to Asn186.

Belongs to the class-V pyridoxal-phosphate-dependent aminotransferase family. NifS/IscS subfamily. Pyridoxal 5'-phosphate is required as a cofactor.

Its subcellular location is the virion. In African swine fever virus (isolate Pig/Kenya/KEN-50/1950) (ASFV), this protein is NifS-like protein.